Consider the following 211-residue polypeptide: Uridine kinase (211 aa).

ATP is bound at residue 12-19 (GGTGSGKT).

This sequence belongs to the uridine kinase family.

Its subcellular location is the cytoplasm. It carries out the reaction uridine + ATP = UMP + ADP + H(+). It catalyses the reaction cytidine + ATP = CMP + ADP + H(+). It functions in the pathway pyrimidine metabolism; CTP biosynthesis via salvage pathway; CTP from cytidine: step 1/3. Its pathway is pyrimidine metabolism; UMP biosynthesis via salvage pathway; UMP from uridine: step 1/1. In Halalkalibacterium halodurans (strain ATCC BAA-125 / DSM 18197 / FERM 7344 / JCM 9153 / C-125) (Bacillus halodurans), this protein is Uridine kinase.